Consider the following 1033-residue polypeptide: NACHT, LRR and PYD domains-containing protein 3 (1033 aa).

The Pyrin domain occupies 1–91 (MTSVRCKLAQ…WEKAKKDQPE (91 aa)). The residue at position 3 (S3) is a Phosphoserine. A disulfide bridge links C6 with C104. At Y11 the chain carries Phosphotyrosine. C126 is lipidated: S-palmitoyl cysteine. Residues 127–130 (KKKK) form a required for binding to phosphatidylinositol 4-phosphate (PtdIns4P) region. 3 positions are modified to phosphotyrosine; by BTK: Y132, Y136, and Y145. An FISNA domain is found at 136 to 206 (YRRHVRSRFY…SSLKLELLFE (71 aa)). S157 bears the Phosphoserine mark. Position 164 is a phosphotyrosine; by BTK (Y164). T165 provides a ligand contact to ATP. A Phosphoserine; by MAPK8 modification is found at S194. S197 is modified (phosphoserine). Positions 216 to 532 (HTVVFQGAAG…EFFAAMYYLL (317 aa)) constitute an NACHT domain. 222–230 (GAAGIGKTI) is an ATP binding site. At S261 the chain carries Phosphoserine. S291 carries the post-translational modification Phosphoserine; by PKD/PRKD1. K320 is covalently cross-linked (Glycyl lysine isopeptide (Lys-Gly) (interchain with G-Cter in ubiquitin)). S330 carries the phosphoserine modification. The KFERQ-like motif 1 motif lies at 351-355 (LEKLQ). K426 participates in a covalent cross-link: Glycyl lysine isopeptide (Lys-Gly) (interchain with G-Cter in ubiquitin). H518 contributes to the ATP binding site. A KFERQ-like motif 2 motif is present at residues 601–605 (QVRLE). K687 is covalently cross-linked (Glycyl lysine isopeptide (Lys-Gly) (interchain with G-Cter in ubiquitin)). 2 positions are modified to phosphoserine: S725 and S732. 5 LRR repeats span residues 739-759 (SLTE…RVLC), 768-789 (NIQR…DISS), 796-816 (KLVE…RLLC), 825-846 (NLQK…DLAL), and 853-873 (SLTR…QVLC). A KFERQ-like motif 3 motif is present at residues 795–799 (QKLVE). Phosphoserine; by CSNK1A1 is present on S803. S-palmitoyl cysteine attachment occurs at residues C834, C835, and C841. Y858 is subject to Phosphotyrosine. K875 is covalently cross-linked (Glycyl lysine isopeptide (Lys-Gly) (interchain with G-Cter in ubiquitin)). LRR repeat units lie at residues 882–903 (NLQK…ALTS), 910–930 (NFTH…RLLC), 939–960 (KLQM…NLST), and 967–988 (SLRK…TLCE). Residue C955 is the site of S-palmitoyl cysteine attachment. A Glycyl lysine isopeptide (Lys-Gly) (interchain with G-Cter in ubiquitin) cross-link involves residue K970. The KFERQ-like motif 4 signature appears at 988 to 992 (EVLKQ). Residue S1032 is modified to Phosphoserine.

It belongs to the NLRP family. In terms of assembly, sensor component of NLRP3 inflammasomes; inflammasomes are supramolecular complexes that assemble in the cytosol in response to pathogens and other damage-associated signals and play critical roles in innate immunity and inflammation. The core of NLRP3 inflammasomes consists of a signal sensor component (NLRP3), an adapter (PYCARD/ASC), which recruits an effector pro-inflammatory caspase (CASP1 and, possibly, CASP4 and CASP5). Homodecamer; inactive NLRP3 forms homodecameric double-ring cages that hide pyrin domains within NACHT-LRR rings to avoid premature activation. Interacts (via pyrin domain) with PYCARD/ASC (via pyrin domain); interaction is direct. Interacts (via LRR repeat domain) with NEK7 (via N-terminus); the interaction is required for the formation of the complex NLRP3:PYCARD, oligomerization of PYCARD/ASC and activation of CASP1. Interacts (via LRR repeat domain) with NR4A1/Nur77 (via N-terminus); the interaction is direct, requires activation of NR4A1 by its ligands NBRE-containing dsDNA and lipopolysaccharide, and stimulates the association of NLRP3 with NEK7 for non-canonical NLRP3 inflammasome activation. Interacts with CARD8; leading to inhibit formation of the NLRP3 inflammasome. Interacts with MEFV; this interaction targets NLRP3 to degradation by autophagy, hence preventing excessive IL1B- and IL18-mediated inflammation. Interacts with EIF2AK2/PKR; this interaction requires EIF2AK2 activity, is accompanied by EIF2AK2 autophosphorylation and promotes inflammasome assembly in response to specific stimuli. Interacts with GBP5 (via DAPIN domain); this interaction promotes inflammasome assembly in response to microbial and soluble, but not crystalline, agents. Interacts with PML (isoform PML-1) (via the leucine-rich repeat (LRR) domain); PML-mediated increase in NLRP3 inflammasome activation does not depend upon this interaction. Interacts (via NACHT domain) with DHX33 (via DEAH box); NLRP3 activation in presence of cytosolic dsRNA is mediated by DHX33. Interacts (via NACHT and LRR domains) with ARRB2; this interaction is direct and inducible by polyunsaturated fatty acids (PUFAs). Interacts (via NACHT domain) with DDX3X under both LPS-primed and inflammasome-activating conditions. Interacts with IRF4 (via the LRR domain); this interaction is direct and is required for optimal IRF4 binding to IL4 promoter and efficient IL4 transactivation during differentiation of Th2 helper T-cells. Interacts with MAVS; promoting localization to mitochondria and activation of the NLRP3 inflammasome. Interacts with MARK4; promoting localization of NLRP3 to the microtubule organizing center (MTOC). Interacts with TRIM50; this interaction also promotes NLRP3 oligomerization and subsequent inflammasome activation. Interacts with IRGM; preventing NLRP3 inflammasome assembly and promoting NLRP3 degradation. Interacts (via KFERQ-like motifs) with HSPA8/HSC70; promoting NLRP3 degradation by the chaperone-mediated autophagy pathway. Interacts (via NACHT and LLR domains) with ABHD8; this interaction is enhanced in the presence of NLRP3 inflammasome inducers, such as ATP, nigericin, silica, or alum. Interaction with ABHD8 leads the recruitment of ZDHHC12, hence facilitating NLRP3 palmitoylation and degradation by the chaperone-mediated autophagy pathway (CMA), therefore attenuating NLRP3 inflammasome activation. Post-translationally, phosphorylation at Ser-194 by MAPK8/JNK1 increases inflammasome activation by promoting deubiquitination by BRCC3 and NLRP3 homooligomerization. Phosphorylation at Ser-803 by CSNK1A1 prevents inflammasome activation by preventing NEK7 recruitment. Phosphorylation at Ser-3 in the pyrin domain inhibits homomultimerization of NLRP3 and activation of the NLRP3 inflammasome: dephosphorylation by protein phosphatase 2A (PP2A) promotes assembly of the NLRP3 inflammasome. Phosphorylation at Ser-291 by PKD/PRKD1 promotes NLRP3 inflammasome assembly. Phosphorylation by ERK1/MAPK3 promotes NLRP3 inflammasome assembly. Phosphorylation by BTK (at Tyr-132, Tyr-136, Tyr-145 and Tyr-164) in the region that mediates binding to phosphatidylinositol phosphate, promotes relocalization of NLRP3 and assembly of the NLRP3 inflammasome. Phosphorylation at Tyr-858 inhibits NLRP3 inflammasome assembly: dephosphorylation by PTPN22 promotes inflammasome activation Phosphorylated by LATS1 and LATS2 at Ser-261 following palmitoylation by ZDHHC1, promoting its relocalization to the microtubule organizing center (MTOC), where NLRP3 is activated by NEK7, leading to inflammasome assembly and activation. In terms of processing, ubiquitinated; undergoes both 'Lys-48'- and 'Lys-63'-linked polyubiquitination. Ubiquitination does not lead to degradation, but inhibits inflammasome activation. Deubiquitination is catalyzed by BRCC3 and associated with NLRP3 activation and inflammasome assembly. This process can be induced by the activation of Toll-like receptors (by LPS), through a non-transcriptional pathway dependent on the mitochondrial production of reactive oxygen species, and by ATP. Ubiquitinated by TRIM31 via 'Lys-48'-linked ubiquitination, leading to its degradation by the proteasome. Ubiquitinated at Lys-687 by the SCF(FBXL2) complex, leading to its degradation by the proteasome. Ubiquitinated by TRIM35 via 'lys-48' and 'Lys-63'-linked ubiquitination leading to inhibition of NLRP3 inflammasome activation. Undergoes 'Lys-27'-linked polyubiquitination by MARCHF5, leading to NLRP3-NEK7 complex formation and NLRP3 oligomerization. The disulfide bond in the pyrin domain might play a role in reactive oxygen species-mediated activation. Post-translationally, palmitoylation by ZDHHC12 promotes NLRP3 degradation by the chaperone-mediated autophagy pathway (CMA) and therefore limits NLRP3 inflammasome activation. Interaction with ZDHHC12, and hence NLRP3 palmitoylation, is enhanced by ABHD8. Following palmitoylation, HSPA8/HSC70 recognizes and binds the KFERQ-like motifs on NLRP3 and promotes NLRP3 recruitment to lysosomes, where it is degraded via the chaperone-mediated autophagy pathway in a LAMP2-dependent process. Palmitoylation at Cys-834 and Cys-835 by ZDHHC5 enhances its binding to NEK7 leading to inflammasome assembly and activation. Palmitoylation at Cys-126 and Cys-955 by ZDHHC1 facilitates phosphorylation at Ser-261 by LATS1 and LATS2, promoting its relocalization to the microtubule organizing center (MTOC), where NLRP3 is activated by NEK7, leading to inflammasome assembly and activation. Depalmitoylated by ABHD17A. In terms of processing, degraded via selective autophagy following interaction with Irgm1. Irgm1 promotes NLRP3 recruitment to autophagosome membranes, promoting its SQSTM1/p62-dependent autophagy-dependent degradation. As to expression, expressed with high levels in peripheral blood leukocytes, including Th2 lymphocytes and macrophages. Expressed at low levels in resting osteoblasts (at protein level).

The protein resides in the cytoplasm. It is found in the cytosol. Its subcellular location is the inflammasome. The protein localises to the cytoskeleton. It localises to the microtubule organizing center. The protein resides in the golgi apparatus membrane. It is found in the endoplasmic reticulum. Its subcellular location is the mitochondrion. The protein localises to the secreted. It localises to the nucleus. The catalysed reaction is ATP + H2O = ADP + phosphate + H(+). Its activity is regulated as follows. Under resting conditions, NLRP3 binds ADP and is autoinhibited. Inactive NLRP3 forms homodecameric double-ring cages that hide pyrin domains within NACHT-LRR rings to avoid premature activation. NLRP3 activation stimuli include extracellular ATP, nigericin, reactive oxygen species, crystals of monosodium urate or cholesterol, amyloid-beta fibers, environmental or industrial particles and nanoparticles, such as asbestos, silica, aluminum salts, cytosolic dsRNA, etc. Almost all stimuli trigger intracellular K(+) efflux. These stimuli lead to membrane perturbations that induce activation of NLRP3. Upon activation, NLRP3 is transported to microtubule organizing center (MTOC), where it is unlocked by NEK7, leading to its relocalization to dispersed trans-Golgi network (dTGN) vesicle membranes and recruitment of PYCARD/ASC for the formation of an active inflammasome complex. NEK7-activated NLRP3 forms a disk-shaped inflammasome. NLRP3 and PYCARD/ASC interact via their respective pyrin domains; interaction initiates speck formation (nucleation) which greatly enhances further addition of soluble PYCARD/ASC molecules to the speck in a prion-like polymerization process. Clustered PYCARD/ASC nucleates the formation of CASP1 filaments through the interaction of their respective CARD domains, acting as a platform for CASP1 polymerization and activation. Active CASP1 then processes IL1B and IL18 precursors, leading to the release of mature cytokines in the extracellular milieu and inflammatory response. NLRP3 inflammasome assembly is inhibited by IRGM, which impedes NLRP3 oligomerization. NLRP3 inflammasome is inhibited by cyclic AMP (cAMP), which directly binds NLRP3; inhibition is relieved by calcium-sensing receptor CASR, which inhibits production of cAMP. Specifically inhibited by sulfonylurea MCC950 (also named CP-456,773, CRID3), a potent and specific small-molecule inhibitor of the NLRP3 inflammasome that acts by preventing ATP hydrolysis. Its function is as follows. Sensor component of the NLRP3 inflammasome, which mediates inflammasome activation in response to defects in membrane integrity, leading to secretion of inflammatory cytokines IL1B and IL18 and pyroptosis. In response to pathogens and other damage-associated signals that affect the integrity of membranes, initiates the formation of the inflammasome polymeric complex composed of NLRP3, CASP1 and PYCARD/ASC. Recruitment of pro-caspase-1 (proCASP1) to the NLRP3 inflammasome promotes caspase-1 (CASP1) activation, which subsequently cleaves and activates inflammatory cytokines IL1B and IL18 and gasdermin-D (GSDMD), promoting cytokine secretion and pyroptosis. Activation of NLRP3 inflammasome is also required for HMGB1 secretion; stimulating inflammatory responses. Under resting conditions, ADP-bound NLRP3 is autoinhibited. NLRP3 activation stimuli include extracellular ATP, nigericin, reactive oxygen species, crystals of monosodium urate or cholesterol, amyloid-beta fibers, environmental or industrial particles and nanoparticles, such as asbestos, silica, aluminum salts, cytosolic dsRNA, etc. Almost all stimuli trigger intracellular K(+) efflux. These stimuli lead to membrane perturbation and activation of NLRP3. Upon activation, NLRP3 is transported to microtubule organizing center (MTOC), where it is unlocked by NEK7, leading to its relocalization to dispersed trans-Golgi network (dTGN) vesicle membranes and formation of an active inflammasome complex. Associates with dTGN vesicle membranes by binding to phosphatidylinositol 4-phosphate (PtdIns4P). Shows ATPase activity. In terms of biological role, independently of inflammasome activation, regulates the differentiation of T helper 2 (Th2) cells and has a role in Th2 cell-dependent asthma and tumor growth. During Th2 differentiation, required for optimal IRF4 binding to IL4 promoter and for IRF4-dependent IL4 transcription. Binds to the consensus DNA sequence 5'-GRRGGNRGAG-3'. May also participate in the transcription of IL5, IL13, GATA3, CCR3, CCR4 and MAF. In Mus musculus (Mouse), this protein is NACHT, LRR and PYD domains-containing protein 3.